The primary structure comprises 243 residues: Adenosine 5'-phosphosulfate reductase (243 aa).

The protein belongs to the PAPS reductase family. CysH subfamily. [4Fe-4S] cluster is required as a cofactor.

The protein resides in the cytoplasm. The enzyme catalyses [thioredoxin]-disulfide + sulfite + AMP + 2 H(+) = adenosine 5'-phosphosulfate + [thioredoxin]-dithiol. Its pathway is sulfur metabolism; hydrogen sulfide biosynthesis; sulfite from sulfate. Catalyzes the formation of sulfite from adenosine 5'-phosphosulfate (APS) using thioredoxin as an electron donor. This Staphylococcus haemolyticus (strain JCSC1435) protein is Adenosine 5'-phosphosulfate reductase.